The sequence spans 203 residues: CCG-binding protein 1 (203 aa).

Residues 156-178 (IPDGLPKSEQELEEEEKSKMPDS) form a disordered region. The segment covering 161 to 175 (PKSEQELEEEEKSKM) has biased composition (basic and acidic residues).

Homotetramer. Interacts with MEE12/CCG, MED7A, MED7B, MED9, AGL49, AGL53, AGL75, AGL80, AGL81, AGL82, AGL103 and NRPB1 (via CTD). As to expression, expressed in roots, leaves, stems and flowers. Expressed in the central cell of mature ovules.

The protein localises to the nucleus. It localises to the cytoplasm. Required for the development of the one-cell zygote and endosperm in embryos. Required for micropylar pollen tube guidance, but has no effect on ovule development and gametophytic cell fate specification. May connect transcription factors and the Pol II machinery to regulate pollen tube attraction, via its interactions with AGAMOUS-like (AGL) transcription factors, MEE14/CCG and the Mediator complex. In Arabidopsis thaliana (Mouse-ear cress), this protein is CCG-binding protein 1.